A 123-amino-acid polypeptide reads, in one-letter code: Pre-B lymphocyte protein 3 (123 aa).

The N-terminal stretch at 1-20 is a signal peptide; that stretch reads MACRCLSFLLMGTFLSVSQT. Residues 21 to 123 form the Ig-like domain; that stretch reads VLAQLDALLV…YCSVGYGFSP (103 aa). Cys40 and Cys115 form a disulfide bridge.

It belongs to the immunoglobulin superfamily. As to expression, expressed in B-cell precursors. Expressed in fetal liver, bone marrow, spleen and lymph node.

Functionally, associates with the Ig-mu chain to form a molecular complex that is expressed on the surface of pre-B-cells. The polypeptide is Pre-B lymphocyte protein 3 (VPREB3) (Homo sapiens (Human)).